The primary structure comprises 275 residues: Shikimate dehydrogenase (NADP(+)) (275 aa).

Shikimate-binding positions include 15 to 17 and T62; that span reads SKS. The Proton acceptor role is filled by K66. E78 lines the NADP(+) pocket. Residues N87 and D102 each contribute to the shikimate site. NADP(+) is bound by residues 128 to 132, 151 to 156, and L218; these read GAGGA and NRTAEK. Residue Y220 participates in shikimate binding. G241 serves as a coordination point for NADP(+).

This sequence belongs to the shikimate dehydrogenase family. As to quaternary structure, homodimer.

The catalysed reaction is shikimate + NADP(+) = 3-dehydroshikimate + NADPH + H(+). The protein operates within metabolic intermediate biosynthesis; chorismate biosynthesis; chorismate from D-erythrose 4-phosphate and phosphoenolpyruvate: step 4/7. Involved in the biosynthesis of the chorismate, which leads to the biosynthesis of aromatic amino acids. Catalyzes the reversible NADPH linked reduction of 3-dehydroshikimate (DHSA) to yield shikimate (SA). The protein is Shikimate dehydrogenase (NADP(+)) of Shouchella clausii (strain KSM-K16) (Alkalihalobacillus clausii).